Consider the following 186-residue polypeptide: LSM12 homolog B (186 aa).

A Sm domain is found at 1–74; that stretch reads MSSLAPCFTV…CMDIEIVKEA (74 aa). An AD domain is found at 84–186; the sequence is EPIDLPMIRE…VVQNFCSKQF (103 aa).

The protein belongs to the LSM12 family. As to quaternary structure, interacts with Sbat; along with Sbat and Vlet, may form an accessory subcomplex involved in SMN complex function.

Its function is as follows. May have an accessory function in the survival motor neuron (SMN) complex. This chain is LSM12 homolog B, found in Drosophila melanogaster (Fruit fly).